The primary structure comprises 497 residues: MNHSAPGIPPPPRRVRLKPWLVAQVNSCQYPGLQWVNGEKKLFYIPWRHATRHGPSQDGDNTIFKAWAKETGKYTEGVDEADPAKWKANLRCALNKSRDFQLFYDGPRDMPPQPYKIYEVCSNGPAPTESQPTDDYVLGEEEEEEEEELQRMLPGLSITEPALPGPPNAPYSLPKEDTKWPPALQPPVGLGPPVPDPNLLAPPSGNPAGFRQLLPEVLEPGPLASSQPPTEPLLPDLLISPHMLPLTDLEIKFQYRGRAPRTLTISNPQGCRLFYSQLEATQEQVELFGPVTLEQVRFPSPEDIPSDKQRFYTNQLLDVLDRGLILQLQGQDLYAIRLCQCKVFWSGPCALAHGSCPNPIQREVKTKLFSLEQFLNELILFQKGQTNTPPPFEIFFCFGEEWPDVKPREKKLITVQVVPVAARLLLEMFSGELSWSADSIRLQISNPDLKDHMVEQFKELHHLWQSQQQLQPMVQAPPVAGLDASQGPWPMHPVGMQ.

The Nuclear localization signal signature appears at 12 to 18; it reads PRRVRLK. Residues 14–122 constitute a DNA-binding region (IRF tryptophan pentad repeat); sequence RVRLKPWLVA…QPYKIYEVCS (109 aa). Residues 124–178 form a disordered region; the sequence is GPAPTESQPTDDYVLGEEEEEEEEELQRMLPGLSITEPALPGPPNAPYSLPKEDT. The segment covering 137-148 has biased composition (acidic residues); that stretch reads VLGEEEEEEEEE. The Nuclear export signal motif lies at 149-159; sequence LQRMLPGLSIT. At Ser157 the chain carries Phosphoserine; by TBK1. The residue at position 300 (Ser300) is a Phosphoserine. Glycyl lysine isopeptide (Lys-Gly) (interchain with G-Cter in ubiquitin) cross-links involve residues Lys410 and Lys411. Ser430 bears the Phosphoserine mark. Ser434 is subject to Phosphoserine; by IKKB. Ser436 and Ser439 each carry phosphoserine. Residue Ser445 is modified to Phosphoserine; by IKKB.

This sequence belongs to the IRF family. As to quaternary structure, homodimer, when phosphorylated. Interacts with TASL (via pLxIS motif); interaction takes place downstream of TLR7, TLR8 or TLR9, leading to its activation. Interacts with MYD88 and TRAF6. In terms of processing, phosphorylation of serine and threonine residues by IKBKB in a C-terminal autoinhibitory region, stimulates dimerization, transport into the nucleus, assembly with the coactivator CBP/EP300 and initiation of transcription. Post-translationally, 'Lys-63'-linked polyubiquitination by TRAF6 is required for activation.

It localises to the cytoplasm. The protein localises to the nucleus. Its activity is regulated as follows. Maintained as a monomer in an autoinhibited state. Phosphorylation and activation follow the following steps: innate adapter protein TASL recruits IRF5, thereby licensing IRF5 for phosphorylation by IKBKB. Phosphorylated IRF5 dissociates from the adapter proteins, dimerizes, and then enters the nucleus to induce IFNs. In terms of biological role, transcription factor that plays a critical role in innate immunity by activating expression of type I interferon (IFN) IFNA and INFB and inflammatory cytokines downstream of endolysosomal toll-like receptors TLR7, TLR8 and TLR9. Regulates the transcription of type I IFN genes (IFN-alpha and IFN-beta) and IFN-stimulated genes (ISG) by binding to an interferon-stimulated response element (ISRE) in their promoters. Can efficiently activate both the IFN-beta (IFNB) and the IFN-alpha (IFNA) genes and mediate their induction downstream of the TLR-activated, MyD88-dependent pathway. This chain is Interferon regulatory factor 5, found in Mus musculus (Mouse).